The primary structure comprises 206 residues: Fibroblast growth factor 4 (206 aa).

Residues 1 to 30 (MSGPGTAAVALLPAVLLALLAPWAGRGGAA) form the signal peptide.

Belongs to the heparin-binding growth factors family. Interacts with FGFR1, FGFR2, FGFR3 and FGFR4. Affinity between fibroblast growth factors (FGFs) and their receptors is increased by heparan sulfate glycosaminoglycans that function as coreceptors.

It is found in the secreted. Functionally, plays an important role in the regulation of embryonic development, cell proliferation, and cell differentiation. Required for normal limb and cardiac valve development during embryogenesis. May play a role in embryonic molar tooth bud development via inducing the expression of MSX1, MSX2 and MSX1-mediated expression of SDC1 in dental mesenchyme cells. The polypeptide is Fibroblast growth factor 4 (Homo sapiens (Human)).